A 317-amino-acid polypeptide reads, in one-letter code: Insulin-like growth factor-binding protein 2 (317 aa).

The signal sequence occupies residues 1–33; it reads MQPRLGGPALLLLPPLLLLLLLGAGGGDCGARA. In terms of domain architecture, IGFBP N-terminal spans 35 to 126; that stretch reads VLFRCPPCTP…VHGEGTCEKH (92 aa). Intrachain disulfides connect C39–C76, C42–C78, C50–C79, C68–C82, C90–C103, and C97–C123. Disordered regions lie at residues 126 to 146 and 190 to 218; these read HGDA…EEHS and QHRQ…ARTP. The Thyroglobulin type-1 domain maps to 216–298; sequence RTPCQQELDQ…APTIRGDPEC (83 aa). 3 cysteine pairs are disulfide-bonded: C219–C253, C264–C275, and C277–C298. The short motif at 293-295 is the Cell attachment site element; it reads RGD.

In terms of assembly, interacts with IGF1. Interacts with IGF2. Interacts (via RGD motif) with integrin alpha5/ITGA5; this interaction induces cell migration, adhesion or apoptosis according to the context. Interacts with PTPRB; this interaction leads to PTPRB dimerization and inactivation. Post-translationally, cleaved by MMP9 leading to release of free IGF2 from IGFBP2-IGF2 complex, which contributes to enhance the motility and the growth of astrocytes. In terms of processing, O-glycosylated.

The protein resides in the secreted. Functionally, multifunctional protein that plays a critical role in regulating the availability of IGFs such as IGF1 and IGF2 to their receptors and thereby regulates IGF-mediated cellular processes including proliferation, differentiation, and apoptosis in a cell-type specific manner. Functions coordinately with receptor protein tyrosine phosphatase beta/PTPRB and the IGF1 receptor to regulate IGF1-mediated signaling by stimulating the phosphorylation of PTEN leading to its inactivation and AKT1 activation. Plays a positive role in cell migration via interaction with integrin alpha5/ITGA5 through an RGD motif. Additionally, interaction with ITGA5/ITGB1 enhances the adhesion of endothelial progenitor cells to endothelial cells. Upon mitochondrial damage, facilitates apoptosis with ITGA5 of podocytes, and then activates the phosphorylation of focal adhesion kinase (FAK)-mediated mitochondrial injury. The chain is Insulin-like growth factor-binding protein 2 (IGFBP2) from Bos taurus (Bovine).